A 257-amino-acid polypeptide reads, in one-letter code: Methylthioribulose-1-phosphate dehydratase (257 aa).

Cys107 lines the substrate pocket. His125 and His127 together coordinate Zn(2+). The Proton donor/acceptor role is filled by Glu148. Zn(2+) is bound at residue His210.

The protein belongs to the aldolase class II family. MtnB subfamily. Zn(2+) serves as cofactor.

The protein resides in the cytoplasm. It carries out the reaction 5-(methylsulfanyl)-D-ribulose 1-phosphate = 5-methylsulfanyl-2,3-dioxopentyl phosphate + H2O. Its pathway is amino-acid biosynthesis; L-methionine biosynthesis via salvage pathway; L-methionine from S-methyl-5-thio-alpha-D-ribose 1-phosphate: step 2/6. In terms of biological role, catalyzes the dehydration of methylthioribulose-1-phosphate (MTRu-1-P) into 2,3-diketo-5-methylthiopentyl-1-phosphate (DK-MTP-1-P). This is Methylthioribulose-1-phosphate dehydratase from Lachancea thermotolerans (strain ATCC 56472 / CBS 6340 / NRRL Y-8284) (Yeast).